The primary structure comprises 205 residues: Small ribosomal subunit protein uS4 (205 aa).

Residues 1 to 46 (MSKRHSAKYKIDRRMGENLWGRPKSPVNSRSYGPGQHGQRRKSKVS) form a disordered region. The S4 RNA-binding domain maps to 94–154 (SRLDAIVYRA…EKSRNMALVL (61 aa)).

The protein belongs to the universal ribosomal protein uS4 family. Part of the 30S ribosomal subunit. Contacts protein S5. The interaction surface between S4 and S5 is involved in control of translational fidelity.

Its function is as follows. One of the primary rRNA binding proteins, it binds directly to 16S rRNA where it nucleates assembly of the body of the 30S subunit. In terms of biological role, with S5 and S12 plays an important role in translational accuracy. This Caulobacter vibrioides (strain ATCC 19089 / CIP 103742 / CB 15) (Caulobacter crescentus) protein is Small ribosomal subunit protein uS4.